We begin with the raw amino-acid sequence, 198 residues long: Nucleoid occlusion factor SlmA (198 aa).

One can recognise an HTH tetR-type domain in the interval 9–70; the sequence is RNRREEILQS…SLIEFIEDSL (62 aa). A DNA-binding region (H-T-H motif) is located at residues 33-52; that stretch reads TTAKLAASVGVSEAALYRHF. Residues 117 to 145 adopt a coiled-coil conformation; that stretch reads EQDRLQGRINQLFERIEAQLRQVLREKKM.

The protein belongs to the nucleoid occlusion factor SlmA family. Homodimer. Interacts with FtsZ.

The protein localises to the cytoplasm. The protein resides in the nucleoid. Functionally, required for nucleoid occlusion (NO) phenomenon, which prevents Z-ring formation and cell division over the nucleoid. Acts as a DNA-associated cell division inhibitor that binds simultaneously chromosomal DNA and FtsZ, and disrupts the assembly of FtsZ polymers. SlmA-DNA-binding sequences (SBS) are dispersed on non-Ter regions of the chromosome, preventing FtsZ polymerization at these regions. The chain is Nucleoid occlusion factor SlmA from Cronobacter sakazakii (strain ATCC BAA-894) (Enterobacter sakazakii).